Reading from the N-terminus, the 88-residue chain is MIKVPAYMYVLECSDGTLYTGYTTDVKRRLNTHNTGKGAKYTRARLPVKLLYSEAFNSKQEAMRAEALFKQKTRQAKLTYIKQHKNEQ.

The GIY-YIG domain maps to 4–80 (VPAYMYVLEC…QKTRQAKLTY (77 aa)).

Belongs to the UPF0213 family.

This chain is UPF0213 protein SAG0778, found in Streptococcus agalactiae serotype V (strain ATCC BAA-611 / 2603 V/R).